Consider the following 446-residue polypeptide: Chromosomal replication initiator protein DnaA (446 aa).

The segment at 1 to 72 is domain I, interacts with DnaA modulators; that stretch reads MENILDLWNK…ADTIYELTGE (72 aa). Positions 72 to 109 are domain II; it reads EELSIKFIIPQNQDEVEAMPKSPIKKMSKEDPVDIPQN. The interval 110–326 is domain III, AAA+ region; the sequence is MLNPKYTFDT…GALIRVVAYS (217 aa). Residues glycine 154, glycine 156, lysine 157, and threonine 158 each coordinate ATP. The domain IV, binds dsDNA stretch occupies residues 327-446; it reads SLINKDINAD…HVKEIKEQLK (120 aa).

This sequence belongs to the DnaA family. In terms of assembly, oligomerizes as a right-handed, spiral filament on DNA at oriC.

The protein resides in the cytoplasm. Its function is as follows. Plays an essential role in the initiation and regulation of chromosomal replication. ATP-DnaA binds to the origin of replication (oriC) to initiate formation of the DNA replication initiation complex once per cell cycle. Binds the DnaA box (a 9 base pair repeat at the origin) and separates the double-stranded (ds)DNA. Forms a right-handed helical filament on oriC DNA; dsDNA binds to the exterior of the filament while single-stranded (ss)DNA is stabiized in the filament's interior. The ATP-DnaA-oriC complex binds and stabilizes one strand of the AT-rich DNA unwinding element (DUE), permitting loading of DNA polymerase. After initiation quickly degrades to an ADP-DnaA complex that is not apt for DNA replication. Binds acidic phospholipids. The sequence is that of Chromosomal replication initiator protein DnaA from Bacillus pumilus (strain SAFR-032).